We begin with the raw amino-acid sequence, 147 residues long: Hemoglobin subunit delta (147 aa).

The region spanning 3 to 147 (HLTPEEKTAV…VANALAHKYH (145 aa)) is the Globin domain. Residue Ser51 is modified to Phosphoserine. His64 and His93 together coordinate heme b.

The protein belongs to the globin family. Heterotetramer of two delta chains and two alpha chains. Red blood cells.

This chain is Hemoglobin subunit delta (HBD), found in Gorilla gorilla gorilla (Western lowland gorilla).